Reading from the N-terminus, the 111-residue chain is FK506-binding protein 1 (111 aa).

Residues 1-20 (MGVEKTIITQGSGPSPQVGQ) form a disordered region. Positions 7 to 20 (IITQGSGPSPQVGQ) are enriched in polar residues. Residues 19–111 (GQKVTMEYTG…IFDVELKKIG (93 aa)) form the PPIase FKBP-type domain.

The protein belongs to the FKBP-type PPIase family. FKBP1 subfamily.

It localises to the cytoplasm. The enzyme catalyses [protein]-peptidylproline (omega=180) = [protein]-peptidylproline (omega=0). With respect to regulation, inhibited by both FK506 and rapamycin. Functionally, PPIases accelerate the folding of proteins. It catalyzes the cis-trans isomerization of proline imidic peptide bonds in oligopeptides. The polypeptide is FK506-binding protein 1 (FPR1) (Gibberella zeae (strain ATCC MYA-4620 / CBS 123657 / FGSC 9075 / NRRL 31084 / PH-1) (Wheat head blight fungus)).